Consider the following 122-residue polypeptide: Large ribosomal subunit protein bL12 (122 aa).

Belongs to the bacterial ribosomal protein bL12 family. In terms of assembly, homodimer. Part of the ribosomal stalk of the 50S ribosomal subunit. Forms a multimeric L10(L12)X complex, where L10 forms an elongated spine to which 2 to 4 L12 dimers bind in a sequential fashion. Binds GTP-bound translation factors.

In terms of biological role, forms part of the ribosomal stalk which helps the ribosome interact with GTP-bound translation factors. Is thus essential for accurate translation. This Staphylococcus aureus (strain Newman) protein is Large ribosomal subunit protein bL12.